We begin with the raw amino-acid sequence, 534 residues long: MSKYIVVTGGVVSSIGKGITSASIGRILRSYGVNVTAIKIDPYLNWDSGTLNPYQHGEVYVTDDGMECDLDLGHYERFLDVELSGKANITTGKVYSSVIEKERKGEYLGSCVQIIPHITDEIKLMIRNVAEKTKAEVVMVEVGGTVGDIESQPFIEAVRQLKNEEGHDNCMFVHVTYVPYLKAAKEFKTKPTQHSTKELRGLGINPDMIVCRSELSLDANLKEKIAHFCDVPIEAVINTPDAHSIYEVPLIMYSANVGSYILNRLNIDTATNKADLYEWSQIVEDLKIETPKVKIAVVGKYIELEDAYISIRESLKHAGAANKVHVDIDWIKADNDFNIDILKQYDGLLIPGGFGERGINGKIEAVKYAIKNNVPIFGICLGLHAMSIAIAQLNGYPDANSTEFDENSTCPVIDMMEEQKKINNMGGTMRLGAYPCKIKEGTLAYEAYKDTNISERHRHRYEVNNEYRDILTSAGAIISGTSPDDFLVEMIELENHPWFLGCQFHPEFKSRPNKAHPLFKSFIKAAKNKKQNQK.

The amidoligase domain stretch occupies residues 1-267; it reads MSKYIVVTGG…GSYILNRLNI (267 aa). Ser13 serves as a coordination point for CTP. Ser13 serves as a coordination point for UTP. Residue 14-19 coordinates ATP; sequence SIGKGI. Tyr54 is an L-glutamine binding site. ATP is bound at residue Asp71. Mg(2+) is bound by residues Asp71 and Glu141. Residues 148–150, 188–193, and Lys224 contribute to the CTP site; these read DIE and KTKPTQ. UTP contacts are provided by residues 188–193 and Lys224; that span reads KTKPTQ. Residues 294 to 532 form the Glutamine amidotransferase type-1 domain; it reads KIAVVGKYIE…IKAAKNKKQN (239 aa). Residue Gly353 coordinates L-glutamine. Cys380 (nucleophile; for glutamine hydrolysis) is an active-site residue. Residues 381–384, Glu403, and Arg460 each bind L-glutamine; that span reads LGLH. Catalysis depends on residues His505 and Glu507.

This sequence belongs to the CTP synthase family. As to quaternary structure, homotetramer.

The catalysed reaction is UTP + L-glutamine + ATP + H2O = CTP + L-glutamate + ADP + phosphate + 2 H(+). The enzyme catalyses L-glutamine + H2O = L-glutamate + NH4(+). It catalyses the reaction UTP + NH4(+) + ATP = CTP + ADP + phosphate + 2 H(+). It participates in pyrimidine metabolism; CTP biosynthesis via de novo pathway; CTP from UDP: step 2/2. Allosterically activated by GTP, when glutamine is the substrate; GTP has no effect on the reaction when ammonia is the substrate. The allosteric effector GTP functions by stabilizing the protein conformation that binds the tetrahedral intermediate(s) formed during glutamine hydrolysis. Inhibited by the product CTP, via allosteric rather than competitive inhibition. In terms of biological role, catalyzes the ATP-dependent amination of UTP to CTP with either L-glutamine or ammonia as the source of nitrogen. Regulates intracellular CTP levels through interactions with the four ribonucleotide triphosphates. In Methanosphaera stadtmanae (strain ATCC 43021 / DSM 3091 / JCM 11832 / MCB-3), this protein is CTP synthase.